Consider the following 158-residue polypeptide: Large ribosomal subunit protein uL16 (158 aa).

Belongs to the universal ribosomal protein uL16 family. In terms of assembly, part of the 50S ribosomal subunit.

Binds 23S rRNA and is also seen to make contacts with the A and possibly P site tRNAs. This chain is Large ribosomal subunit protein uL16, found in Parasynechococcus marenigrum (strain WH8102).